A 424-amino-acid polypeptide reads, in one-letter code: Adenylosuccinate synthetase (424 aa).

Residues 12–18 (GDEGKGK) and 40–42 (GHT) each bind GTP. D13 acts as the Proton acceptor in catalysis. Positions 13 and 40 each coordinate Mg(2+). Residues 13 to 16 (DEGK), 38 to 41 (NAGH), T130, R144, N220, T235, and R299 contribute to the IMP site. Catalysis depends on H41, which acts as the Proton donor. 295–301 (VTTGRRR) is a binding site for substrate. GTP contacts are provided by residues R301, 327-329 (KLD), and 412-414 (GTG).

It belongs to the adenylosuccinate synthetase family. Homodimer. Requires Mg(2+) as cofactor.

The protein resides in the cytoplasm. The enzyme catalyses IMP + L-aspartate + GTP = N(6)-(1,2-dicarboxyethyl)-AMP + GDP + phosphate + 2 H(+). The protein operates within purine metabolism; AMP biosynthesis via de novo pathway; AMP from IMP: step 1/2. Functionally, plays an important role in the de novo pathway and in the salvage pathway of purine nucleotide biosynthesis. Catalyzes the first committed step in the biosynthesis of AMP from IMP. The polypeptide is Adenylosuccinate synthetase (Aspergillus niger (strain ATCC MYA-4892 / CBS 513.88 / FGSC A1513)).